Reading from the N-terminus, the 382-residue chain is Galactokinase (382 aa).

Residue E34–D37 participates in substrate binding. G124–S130 is an ATP binding site. S130 and E162 together coordinate Mg(2+). D174 serves as the catalytic Proton acceptor. Position 223 (Y223) interacts with substrate.

The protein belongs to the GHMP kinase family. GalK subfamily.

The protein resides in the cytoplasm. It carries out the reaction alpha-D-galactose + ATP = alpha-D-galactose 1-phosphate + ADP + H(+). It functions in the pathway carbohydrate metabolism; galactose metabolism. In terms of biological role, catalyzes the transfer of the gamma-phosphate of ATP to D-galactose to form alpha-D-galactose-1-phosphate (Gal-1-P). The sequence is that of Galactokinase from Escherichia coli O9:H4 (strain HS).